Here is a 78-residue protein sequence, read N- to C-terminus: Acyl carrier protein (78 aa).

The Carrier domain maps to 2–77 (STIEERVKKI…AAIDYVNSHK (76 aa)). Residue S37 is modified to O-(pantetheine 4'-phosphoryl)serine.

Belongs to the acyl carrier protein (ACP) family. In terms of processing, 4'-phosphopantetheine is transferred from CoA to a specific serine of apo-ACP by AcpS. This modification is essential for activity because fatty acids are bound in thioester linkage to the sulfhydryl of the prosthetic group.

Its subcellular location is the cytoplasm. It participates in lipid metabolism; fatty acid biosynthesis. Functionally, carrier of the growing fatty acid chain in fatty acid biosynthesis. The sequence is that of Acyl carrier protein from Pseudomonas putida (strain GB-1).